We begin with the raw amino-acid sequence, 116 residues long: UPF0102 protein IL0423 (116 aa).

It belongs to the UPF0102 family.

This chain is UPF0102 protein IL0423, found in Idiomarina loihiensis (strain ATCC BAA-735 / DSM 15497 / L2-TR).